The sequence spans 340 residues: Guanine nucleotide-binding protein subunit beta-1 (340 aa).

Ser29 bears the Phosphoserine mark. WD repeat units follow at residues 53–92 (GHLAKIYAMHWGNDSRNLVSASQDGKLIVWDSHTTNKVHA), 95–134 (LRSSWVMTCAYAPSGSYVACGGLDNMCSIYNLKTREGNVR), 141–179 (GHGGYLSCCRFLDDNQIVTSSGDMSCGLWDIETGLQVTS), 182–221 (GHTGDVMALSLAPQCKTFVSGACDASAKLWDIREGVCKQT), 224–263 (GHESDINAVTFFPNGQAFATGSDDATCRLFDIRADQELAM), 268–307 (NIICGITSVAFSKSGRLLLAGYDDFNCNVWDTMKAERSGI), and 310–340 (GHDNRVSCLGVTENGMAVATGSWDSFLRVWN).

It belongs to the WD repeat G protein beta family. In terms of assembly, g proteins are composed of 3 units, alpha, beta and gamma. In terms of tissue distribution, expressed in the brain neuropil and cortex, and the thoracic ganglion (at protein level). Expression detected in eye at protein level but not at mRNA level, suggesting cross reactivity of antibodies to the similar Gbeta76C protein.

Functionally, guanine nucleotide-binding proteins (G proteins) are involved as a modulator or transducer in various transmembrane signaling systems. The beta and gamma chains are required for the GTPase activity, for replacement of GDP by GTP, and for G protein-effector interaction. This chain is Guanine nucleotide-binding protein subunit beta-1 (Gbeta13F), found in Drosophila melanogaster (Fruit fly).